We begin with the raw amino-acid sequence, 229 residues long: Adenylate kinase (229 aa).

ATP is bound at residue 10–15; it reads GSGKGT. The interval 30 to 59 is NMP; the sequence is ESGVIFREHISKGTELGKQAKSYIDKGELV. AMP is bound by residues S31, R36, 57-59, 84-87, and Q91; these read ELV and GFPR. An LID region spans residues 125 to 164; it reads GRRICKTNNNHPNNVSIDSIKPDGNNCRVCHGELIVRTDD. R126 serves as a coordination point for ATP. AMP contacts are provided by R161 and R173. Residue N209 participates in ATP binding.

The protein belongs to the adenylate kinase family. As to quaternary structure, monomer.

Its subcellular location is the cytoplasm. The catalysed reaction is AMP + ATP = 2 ADP. It participates in purine metabolism; AMP biosynthesis via salvage pathway; AMP from ADP: step 1/1. Catalyzes the reversible transfer of the terminal phosphate group between ATP and AMP. Plays an important role in cellular energy homeostasis and in adenine nucleotide metabolism. The protein is Adenylate kinase of Lawsonia intracellularis (strain PHE/MN1-00).